The sequence spans 247 residues: Probable transcriptional regulatory protein ECA2494 (247 aa).

Belongs to the TACO1 family.

It localises to the cytoplasm. This Pectobacterium atrosepticum (strain SCRI 1043 / ATCC BAA-672) (Erwinia carotovora subsp. atroseptica) protein is Probable transcriptional regulatory protein ECA2494.